Consider the following 90-residue polypeptide: Probable Fe(2+)-trafficking protein (90 aa).

The protein belongs to the Fe(2+)-trafficking protein family.

In terms of biological role, could be a mediator in iron transactions between iron acquisition and iron-requiring processes, such as synthesis and/or repair of Fe-S clusters in biosynthetic enzymes. The chain is Probable Fe(2+)-trafficking protein from Pseudomonas aeruginosa (strain UCBPP-PA14).